Consider the following 208-residue polypeptide: Adenylate kinase (208 aa).

Residue 10 to 15 (GAGKGT) coordinates ATP. An NMP region spans residues 30–59 (STGEMLRAAVAAGTPVGLKAKDVMASGGLV). AMP is bound by residues T31, R36, 57–59 (GLV), 85–88 (GFPR), and Q92. An LID region spans residues 126–142 (SRVAEMTARGEQVRADD). R127 contacts ATP. 2 residues coordinate AMP: R139 and R150. M178 contacts ATP.

This sequence belongs to the adenylate kinase family. Monomer.

Its subcellular location is the cytoplasm. It catalyses the reaction AMP + ATP = 2 ADP. It functions in the pathway purine metabolism; AMP biosynthesis via salvage pathway; AMP from ADP: step 1/1. In terms of biological role, catalyzes the reversible transfer of the terminal phosphate group between ATP and AMP. Plays an important role in cellular energy homeostasis and in adenine nucleotide metabolism. The sequence is that of Adenylate kinase from Nitrobacter hamburgensis (strain DSM 10229 / NCIMB 13809 / X14).